Reading from the N-terminus, the 403-residue chain is Formate-dependent phosphoribosylglycinamide formyltransferase (403 aa).

N(1)-(5-phospho-beta-D-ribosyl)glycinamide-binding positions include 27-28 (EL) and Glu87. ATP-binding positions include Arg120, Lys161, 166–171 (SSGKGQ), 201–204 (EGFV), and Glu209. The 195-residue stretch at 125 to 319 (RLAAEELGLP…EFELHARAIL (195 aa)) folds into the ATP-grasp domain. Mg(2+) is bound by residues Glu278 and Glu290. N(1)-(5-phospho-beta-D-ribosyl)glycinamide-binding positions include Asp297, Lys366, and 373 to 374 (RR). A disordered region spans residues 382-403 (GPDVETARSRAREAASRVEPVA). A compositionally biased stretch (basic and acidic residues) spans 386–397 (ETARSRAREAAS).

This sequence belongs to the PurK/PurT family. In terms of assembly, homodimer.

The enzyme catalyses N(1)-(5-phospho-beta-D-ribosyl)glycinamide + formate + ATP = N(2)-formyl-N(1)-(5-phospho-beta-D-ribosyl)glycinamide + ADP + phosphate + H(+). The protein operates within purine metabolism; IMP biosynthesis via de novo pathway; N(2)-formyl-N(1)-(5-phospho-D-ribosyl)glycinamide from N(1)-(5-phospho-D-ribosyl)glycinamide (formate route): step 1/1. In terms of biological role, involved in the de novo purine biosynthesis. Catalyzes the transfer of formate to 5-phospho-ribosyl-glycinamide (GAR), producing 5-phospho-ribosyl-N-formylglycinamide (FGAR). Formate is provided by PurU via hydrolysis of 10-formyl-tetrahydrofolate. This Rhodococcus jostii (strain RHA1) protein is Formate-dependent phosphoribosylglycinamide formyltransferase.